Here is a 742-residue protein sequence, read N- to C-terminus: Phosphoribosylformylglycinamidine synthase subunit PurL (742 aa).

H54 is an active-site residue. ATP-binding residues include Y57 and K96. E98 provides a ligand contact to Mg(2+). Substrate contacts are provided by residues 99–102 (SHNH) and R121. Catalysis depends on H100, which acts as the Proton acceptor. Residue D122 coordinates Mg(2+). Residue Q245 participates in substrate binding. D273 lines the Mg(2+) pocket. 317–319 (ESQ) contacts substrate. 2 residues coordinate ATP: D500 and G537. Mg(2+) is bound at residue N538. Position 540 (S540) interacts with substrate.

Belongs to the FGAMS family. In terms of assembly, monomer. Part of the FGAM synthase complex composed of 1 PurL, 1 PurQ and 2 PurS subunits.

It is found in the cytoplasm. The catalysed reaction is N(2)-formyl-N(1)-(5-phospho-beta-D-ribosyl)glycinamide + L-glutamine + ATP + H2O = 2-formamido-N(1)-(5-O-phospho-beta-D-ribosyl)acetamidine + L-glutamate + ADP + phosphate + H(+). The protein operates within purine metabolism; IMP biosynthesis via de novo pathway; 5-amino-1-(5-phospho-D-ribosyl)imidazole from N(2)-formyl-N(1)-(5-phospho-D-ribosyl)glycinamide: step 1/2. Its function is as follows. Part of the phosphoribosylformylglycinamidine synthase complex involved in the purines biosynthetic pathway. Catalyzes the ATP-dependent conversion of formylglycinamide ribonucleotide (FGAR) and glutamine to yield formylglycinamidine ribonucleotide (FGAM) and glutamate. The FGAM synthase complex is composed of three subunits. PurQ produces an ammonia molecule by converting glutamine to glutamate. PurL transfers the ammonia molecule to FGAR to form FGAM in an ATP-dependent manner. PurS interacts with PurQ and PurL and is thought to assist in the transfer of the ammonia molecule from PurQ to PurL. The polypeptide is Phosphoribosylformylglycinamidine synthase subunit PurL (Geobacillus thermodenitrificans (strain NG80-2)).